The chain runs to 546 residues: MVHPVELPAWKELEALAATTGRRPMRDMFAEDPGRFDRFSARLGDLLLDYSKNRIDAQVMAALVRLAGQAGLPAAREAMFGGEAFNVTEHRAVLHTALRNRSDRPVPVDGHDVMPEIRAVLARMKDFAGRVRSGDWKGATGRPIRSVVNIGIGGSDLGPVMVTEALKPYQKADLAVHFISNVDGSHAAEVLKLCDAETTLFIVASKTFTTQETIANARTCRAWLVEKLGEAAIPAHFVALSTNGKAVAEFGIDTANMFGFWDWVGGRYSLWSAIGLSIALAVGFERFEELLAGGHAMDRHFQDTPLEANLPVILGLIGIWNANFLGADAYAVLPYDQYLHRLPAYLQQLDMESNGKGTARDGATVSWGTGPMVFGEPGTNGQHAFYQLIHQGTRLIPCDFLAAANSHNPLGEHHLMLLSNVLAQAEALMKGKTGAEARAELEKAGMDPAEIAFQLPHRVFPGNRPSNTLLYPRLDPFMLGQLIALYEHKVFVQGVIWNICSFDQWGVELGKVLAKAILAELSSEKTSSTHDCSTAGLINAVRQMRQ.

The active-site Proton donor is glutamate 352. Catalysis depends on residues histidine 383 and lysine 511.

This sequence belongs to the GPI family.

The protein localises to the cytoplasm. The enzyme catalyses alpha-D-glucose 6-phosphate = beta-D-fructose 6-phosphate. Its pathway is carbohydrate biosynthesis; gluconeogenesis. The protein operates within carbohydrate degradation; glycolysis; D-glyceraldehyde 3-phosphate and glycerone phosphate from D-glucose: step 2/4. Its function is as follows. Catalyzes the reversible isomerization of glucose-6-phosphate to fructose-6-phosphate. In Paramagnetospirillum magneticum (strain ATCC 700264 / AMB-1) (Magnetospirillum magneticum), this protein is Glucose-6-phosphate isomerase.